Consider the following 339-residue polypeptide: UDP-glucose 4-epimerase (339 aa).

NAD(+) contacts are provided by residues 12-13 (FI), 32-37 (DNLCNS), 59-60 (DI), 81-85 (FAGLK), Asn100, Ser125, Tyr150, Lys154, and Phe179. 2 residues coordinate substrate: Ser125 and Tyr150. The active-site Proton acceptor is Tyr150. Substrate-binding positions include Asn180, 200-201 (NL), 217-219 (SVF), Arg232, and 293-296 (RAGD).

Belongs to the NAD(P)-dependent epimerase/dehydratase family. Homodimer. NAD(+) is required as a cofactor.

It carries out the reaction UDP-alpha-D-glucose = UDP-alpha-D-galactose. The protein operates within carbohydrate metabolism; galactose metabolism. Its function is as follows. Involved in the metabolism of galactose. Plays an essential role in the incorporation of galactose into meningococcal lipopolysaccharide surface molecules, which are important for pathogenesis. Catalyzes the conversion of UDP-galactose (UDP-Gal) to UDP-glucose (UDP-Glc) through a mechanism involving the transient reduction of NAD. This is UDP-glucose 4-epimerase (galE) from Neisseria meningitidis serogroup A / serotype 4A (strain DSM 15465 / Z2491).